Reading from the N-terminus, the 394-residue chain is 5-azacytidine-induced protein 2 (394 aa).

Residues 1-197 (MDALVEDDIC…IELRKAKQTD (197 aa)) form a homodimerization region. Coiled-coil stretches lie at residues 40-76 (ALVT…LIAR) and 102-196 (DRDN…AKQT). The interaction with TBK1 and IKBKE stretch occupies residues 216–257 (SDNMQHAYWELKREMSNLHLVTQVQAELLRKLKTSTAIKKAC). Phosphoserine is present on residues Ser-318 and Ser-355. Residues 355–379 (SPPKSSETAFGETKSKTLPLPNLPP) are disordered.

In terms of assembly, homodimer. Interacts with IKBKE, TBK1 and TICAM1. Interacts with TAX1BP1. Interacts with CALCOCO2. Ubiquitinated via 'Lys-48'-linked polyubiquitination by TRIM38, leading to its degradation.

The protein localises to the cytoplasm. Its function is as follows. Adapter protein which binds TBK1 and IKBKE playing a role in antiviral innate immunity. Activates serine/threonine-protein kinase TBK1 and facilitates its oligomerization. Enhances the phosphorylation of NF-kappa-B p65 subunit RELA by TBK1. Promotes TBK1-induced as well as TNF-alpha or PMA-induced activation of NF-kappa-B. Participates in IFNB promoter activation via TICAM1. The chain is 5-azacytidine-induced protein 2 (AZI2) from Macaca fascicularis (Crab-eating macaque).